Here is a 491-residue protein sequence, read N- to C-terminus: Regulatory protein NPR5 (491 aa).

One can recognise a BTB domain in the interval 26 to 116 (SDVTFSVEGR…LYSGQVSIVP (91 aa)). The segment at 122–136 (RPNCGERGCWHTHCS) adopts a C2HC NPR-type zinc-finger fold. Zn(2+) is bound by residues C125, C130, H132, and C135. ANK repeat units follow at residues 254–283 (QKIR…LNLD), 284–313 (ESLA…DVNY), 318–347 (AGKT…DPNV), and 351–385 (GGIT…KLRL). The tract at residues 400–491 (EEGNNSNNQN…MYHHHHQHHF (92 aa)) is disordered. Over residues 403–413 (NNSNNQNNDNN) the composition is skewed to low complexity. The span at 457–470 (DQGDDHNSQREGMS) shows a compositional bias: basic and acidic residues.

This sequence belongs to the plant 'ANKYRIN-BTB/POZ' family. 'NOOT-BOP-COCH-like' (NBCL) subfamily. Homodimer or heterodimer with BOP1. Interacts with PAN. In terms of tissue distribution, highly expressed in young floral meristem. Predominantly expressed in the boundary between floral meristem (FM) and sepal primordia.

Its subcellular location is the cytoplasm. The protein resides in the nucleus. It participates in protein modification; protein ubiquitination. In terms of biological role, may act as a substrate-specific adapter of an E3 ubiquitin-protein ligase complex (CUL3-RBX1-BTB) which mediates the ubiquitination and subsequent proteasomal degradation of target proteins. Acts redundantly with BOP2. BOP1/2 promote leaf and floral meristem fate and determinacy in a pathway targeting AP1 and AGL24. BOP1/2 act as transcriptional co-regulators through direct interaction with TGA factors, including PAN, a direct regulator of AP1. Controls lateral organ fate through positive regulation of adaxial-abaxial polarity genes ATHB-14/PHB, YAB1/FIL and YAB3, and through positive regulation of LOB domain-containing genes LOB, LBD6/AS2 and LBD36. Promotes and maintains a developmentally determinate state in leaf cells through the negative regulation of JAG, JGL and class I KNOX genes. Is also involved in nectary development, formation of normal abscission zones (AZs) and suppression of bract formation, probably by regulating the cell wall disorganization. This chain is Regulatory protein NPR5, found in Arabidopsis thaliana (Mouse-ear cress).